A 264-amino-acid polypeptide reads, in one-letter code: 3-methyl-2-oxobutanoate hydroxymethyltransferase (264 aa).

Mg(2+)-binding residues include aspartate 45 and aspartate 84. Residues 45 to 46 (DS), aspartate 84, and lysine 112 each bind 3-methyl-2-oxobutanoate. Glutamate 114 lines the Mg(2+) pocket. Glutamate 181 serves as the catalytic Proton acceptor.

Belongs to the PanB family. In terms of assembly, homodecamer; pentamer of dimers. Mg(2+) is required as a cofactor.

The protein localises to the cytoplasm. It carries out the reaction 3-methyl-2-oxobutanoate + (6R)-5,10-methylene-5,6,7,8-tetrahydrofolate + H2O = 2-dehydropantoate + (6S)-5,6,7,8-tetrahydrofolate. Its pathway is cofactor biosynthesis; (R)-pantothenate biosynthesis; (R)-pantoate from 3-methyl-2-oxobutanoate: step 1/2. Its function is as follows. Catalyzes the reversible reaction in which hydroxymethyl group from 5,10-methylenetetrahydrofolate is transferred onto alpha-ketoisovalerate to form ketopantoate. The polypeptide is 3-methyl-2-oxobutanoate hydroxymethyltransferase (Shigella boydii serotype 18 (strain CDC 3083-94 / BS512)).